The sequence spans 367 residues: C-X-C chemokine receptor type 3 (367 aa).

At M1–P56 the chain is on the extracellular side. A glycan (N-linked (GlcNAc...) asparagine) is linked at N22. Y27 and Y29 each carry sulfotyrosine. N-linked (GlcNAc...) asparagine glycosylation occurs at N32. Residues V57 to L77 form a helical membrane-spanning segment. Over L78–T89 the chain is Cytoplasmic. The helical transmembrane segment at F90 to V110 threads the bilayer. At D111 to V125 the chain is on the extracellular side. A disulfide bridge links C123 with C202. The helical transmembrane segment at A126–F146 threads the bilayer. Over D147 to A168 the chain is Cytoplasmic. A helical transmembrane segment spans residues L169–L189. The Extracellular portion of the chain corresponds to S190–G222. Residue N198 is glycosylated (N-linked (GlcNAc...) asparagine). A helical transmembrane segment spans residues F223 to V243. The Cytoplasmic segment spans residues S244–L255. Residues V256–V276 form a helical membrane-spanning segment. Over D277–S300 the chain is Extracellular. Residues V301–G321 traverse the membrane as a helical segment. Over V322–L367 the chain is Cytoplasmic. The segment at D339–L367 is disordered.

It belongs to the G-protein coupled receptor 1 family. Homomer. Forms heteromers with ACKR4. Interacts with PF4/CXCL4. Sulfation on Tyr-27 and Tyr-29 is essential for CXCL10 binding. In terms of processing, N-glycosylated.

The protein localises to the cell membrane. Receptor for the C-X-C chemokine CXCL9, CXCL10 and CXCL11 and mediates the proliferation, survival and angiogenic activity of mesangial cells through a heterotrimeric G-protein signaling pathway. Probably promotes cell chemotaxis response. Binds to CCL21. Upon activation by PF4, induces activated T-lymphocytes migration mediated via downstream Ras/extracellular signal-regulated kinase (ERK) signaling. This is C-X-C chemokine receptor type 3 (Cxcr3) from Rattus norvegicus (Rat).